We begin with the raw amino-acid sequence, 213 residues long: Probable GTP-binding protein EngB (213 aa).

In terms of domain architecture, EngB-type G spans 25–203; it reads EGTEVAFAGR…EDVLNGWLLP (179 aa). Residues 33–40, 60–64, 80–83, 147–150, and 179–184 contribute to the GTP site; these read GRSNAGKS, GRTQL, DLPG, TKAD, and AQMFSA. Positions 40 and 62 each coordinate Mg(2+).

Belongs to the TRAFAC class TrmE-Era-EngA-EngB-Septin-like GTPase superfamily. EngB GTPase family. It depends on Mg(2+) as a cofactor.

Necessary for normal cell division and for the maintenance of normal septation. This is Probable GTP-binding protein EngB from Saccharophagus degradans (strain 2-40 / ATCC 43961 / DSM 17024).